The chain runs to 130 residues: Small ribosomal subunit protein uS11c (130 aa).

Belongs to the universal ribosomal protein uS11 family. As to quaternary structure, part of the 30S ribosomal subunit.

Its subcellular location is the plastid. It is found in the cyanelle. This chain is Small ribosomal subunit protein uS11c, found in Cyanophora paradoxa.